A 156-amino-acid chain; its full sequence is Xanthocillin biosynthesis cluster protein D (156 aa).

2 N-linked (GlcNAc...) asparagine glycosylation sites follow: asparagine 107 and asparagine 120. A helical membrane pass occupies residues 131 to 153 (IHLNAIALVATVWYGFTLSSSLL).

It localises to the membrane. It functions in the pathway secondary metabolite biosynthesis. In terms of biological role, part of the gene cluster that mediates the biosynthesis of the isocyanide xanthocillin and its derivatives. The first step of the pathway consists in the conversion of tyrosine into a vinyl-isonitrile intermediate by the isocyanide synthase xanB. Subsequent oxidative dimerization of this intermediate to form xanthocillin may involve the cytochrome P450 monooxygenase xanG, whose expression is coregulated with that of XanB. Xanthocillin can be further modified by the isonitrile hydratase-like protein xanA which introduces N-formyl groups and the methyltransferase xanE which introduces methyl groups, leading to the production of several derivatives including fumiformamide. Finally, fumiformamide can be subject to both oxidative and reductive cyclization to yield melanocins E and F, respectively. This Aspergillus fumigatus (strain ATCC MYA-4609 / CBS 101355 / FGSC A1100 / Af293) (Neosartorya fumigata) protein is Xanthocillin biosynthesis cluster protein D.